A 334-amino-acid polypeptide reads, in one-letter code: 7,8-didemethyl-8-hydroxy-5-deazariboflavin synthase (334 aa).

In terms of domain architecture, Radical SAM core spans 2-248 (VSYSKNVFVP…PDVPVQVPPN (247 aa)). Positions 16, 20, and 23 each coordinate [4Fe-4S] cluster.

This sequence belongs to the radical SAM superfamily. CofG family. In terms of assembly, consists of two subunits, CofG and CofH. It depends on [4Fe-4S] cluster as a cofactor.

It carries out the reaction 5-amino-5-(4-hydroxybenzyl)-6-(D-ribitylimino)-5,6-dihydrouracil + S-adenosyl-L-methionine = 7,8-didemethyl-8-hydroxy-5-deazariboflavin + 5'-deoxyadenosine + L-methionine + NH4(+) + H(+). It participates in cofactor biosynthesis; coenzyme F0 biosynthesis. Functionally, catalyzes the radical-mediated synthesis of 7,8-didemethyl-8-hydroxy-5-deazariboflavin from 5-amino-5-(4-hydroxybenzyl)-6-(D-ribitylimino)-5,6-dihydrouracil. The chain is 7,8-didemethyl-8-hydroxy-5-deazariboflavin synthase from Methanopyrus kandleri (strain AV19 / DSM 6324 / JCM 9639 / NBRC 100938).